The following is an 860-amino-acid chain: JmjC domain-containing histone demethylation protein 1 (860 aa).

Disordered regions lie at residues 1–45, 117–212, and 408–440; these read MSEQ…EEGK, STSP…PKRK, and DVKE…GGEI. The PHD-type zinc finger occupies 23–116; it reads PEPCPLCRET…KWYCAPCLAR (94 aa). Composition is skewed to basic and acidic residues over residues 183 to 192 and 408 to 433; these read IDMKSEREQQ and DVKE…HLTE. The JmjC domain occupies 416–579; sequence NDSREGSEIR…TQLRLRQIEI (164 aa). Residue Thr-471 coordinates substrate. Residues His-474 and Asp-476 each coordinate Fe cation. Lys-491 serves as a coordination point for substrate. Fe cation is bound at residue His-547. Disordered stretches follow at residues 744 to 795 and 837 to 860; these read HPPA…ANEN and GPKL…DIDH. Residues 750-763 show a composition bias toward polar residues; it reads ENRQSPQIETTTVQ. Low complexity predominate over residues 767-795; that stretch reads PSTSSSDAISGSGPGASPGASANGGANEN.

Belongs to the JHDM1 histone demethylase family. Requires Fe(2+) as cofactor.

Its subcellular location is the nucleus. The catalysed reaction is N(6),N(6)-dimethyl-L-lysyl(36)-[histone H3] + 2 2-oxoglutarate + 2 O2 = L-lysyl(36)-[histone H3] + 2 formaldehyde + 2 succinate + 2 CO2. Histone demethylase that specifically demethylates 'Lys-36' of histone H3, thereby playing a central role in histone code. This is JmjC domain-containing histone demethylation protein 1 (JHD1) from Cryptococcus neoformans var. neoformans serotype D (strain JEC21 / ATCC MYA-565) (Filobasidiella neoformans).